The primary structure comprises 1926 residues: Rho GTPase-activating protein 21-A (1926 aa).

The interval 1-41 (MATRRAIVPEQQQEPSSPASEISKNKDGQEQSEMVSPMEEE) is disordered. Polar residues predominate over residues 10-22 (EQQQEPSSPASEI). The PDZ domain maps to 77–162 (HTSIKDEENG…TLELSVMPKD (86 aa)). Disordered stretches follow at residues 211-236 (VEVP…TTQP), 353-378 (PTAQ…QIDW), 416-487 (TDYN…RSES), 571-592 (QPTR…DRSG), 640-704 (FQRK…DSDA), and 868-905 (GKLG…DVFS). Polar residues-rich tracts occupy residues 216-236 (SGTS…TTQP), 353-372 (PTAQ…SPGP), and 416-429 (TDYN…FSGQ). Residues 441–451 (QQSVQMRQRSV) are compositionally biased toward low complexity. Over residues 452 to 466 (SQERLEDPVLMKEWP) the composition is skewed to basic and acidic residues. Polar residues predominate over residues 468 to 479 (SASQDTLSSAVA). Residues 640–669 (FQRKTQTESASGFQLDSVKTSMSASSSPPA) show a composition bias toward polar residues. In terms of domain architecture, PH spans 906-1019 (DSNKEGFLYF…WIKAIQENGN (114 aa)). The span at 1044–1064 (MSSASNKSEQSPKAPRQTLSI) shows a compositional bias: polar residues. The segment at 1044–1107 (MSSASNKSEQ…SPPKDKGSWR (64 aa)) is disordered. Over residues 1083–1105 (PKQESERRLFSKDDISPPKDKGS) the composition is skewed to basic and acidic residues. Positions 1126-1318 (VRLDDCPPAH…TLIQKHDWFF (193 aa)) constitute a Rho-GAP domain. Disordered stretches follow at residues 1330-1381 (VHEE…SGKD), 1396-1416 (ASRK…EDEL), 1512-1540 (QMEE…PKVV), 1573-1598 (LDPN…DERS), 1626-1658 (RQHR…TPRL), and 1827-1915 (STSE…LSGT). Polar residues predominate over residues 1512–1534 (QMEESMSDSGTMLSNSSQASAQR). Polar residues-rich tracts occupy residues 1639–1653 (VQAN…TEGS) and 1866–1902 (TADI…NNFS).

It is found in the golgi apparatus membrane. It localises to the cell junction. The protein localises to the cytoplasmic vesicle membrane. The protein resides in the cytoplasm. Its subcellular location is the cytoskeleton. In terms of biological role, GTPase-activating protein (GAP) for rhoa and cdc42. The protein is Rho GTPase-activating protein 21-A (arhgap21-a) of Xenopus laevis (African clawed frog).